The chain runs to 233 residues: Phosphoribosylformylglycinamidine synthase subunit PurQ (233 aa).

Positions 9–233 (RIGIVTFPGS…LSGFLSAFSS (225 aa)) constitute a Glutamine amidotransferase type-1 domain. Cysteine 92 acts as the Nucleophile in catalysis. Residues histidine 201 and glutamate 203 contribute to the active site.

Part of the FGAM synthase complex composed of 1 PurL, 1 PurQ and 2 PurS subunits.

The protein resides in the cytoplasm. It catalyses the reaction N(2)-formyl-N(1)-(5-phospho-beta-D-ribosyl)glycinamide + L-glutamine + ATP + H2O = 2-formamido-N(1)-(5-O-phospho-beta-D-ribosyl)acetamidine + L-glutamate + ADP + phosphate + H(+). The enzyme catalyses L-glutamine + H2O = L-glutamate + NH4(+). Its pathway is purine metabolism; IMP biosynthesis via de novo pathway; 5-amino-1-(5-phospho-D-ribosyl)imidazole from N(2)-formyl-N(1)-(5-phospho-D-ribosyl)glycinamide: step 1/2. Functionally, part of the phosphoribosylformylglycinamidine synthase complex involved in the purines biosynthetic pathway. Catalyzes the ATP-dependent conversion of formylglycinamide ribonucleotide (FGAR) and glutamine to yield formylglycinamidine ribonucleotide (FGAM) and glutamate. The FGAM synthase complex is composed of three subunits. PurQ produces an ammonia molecule by converting glutamine to glutamate. PurL transfers the ammonia molecule to FGAR to form FGAM in an ATP-dependent manner. PurS interacts with PurQ and PurL and is thought to assist in the transfer of the ammonia molecule from PurQ to PurL. The polypeptide is Phosphoribosylformylglycinamidine synthase subunit PurQ (Frankia casuarinae (strain DSM 45818 / CECT 9043 / HFP020203 / CcI3)).